Reading from the N-terminus, the 189-residue chain is Glycerol-3-phosphate acyltransferase (189 aa).

5 helical membrane passes run 1–21, 50–70, 77–97, 111–131, and 151–171; these read MFWL…AIVL, KLAI…VLLA, LHAQ…PLYF, MLMA…LLTF, and LLAW…VMIV.

The protein belongs to the PlsY family. In terms of assembly, probably interacts with PlsX.

The protein resides in the cell inner membrane. It catalyses the reaction an acyl phosphate + sn-glycerol 3-phosphate = a 1-acyl-sn-glycero-3-phosphate + phosphate. Its pathway is lipid metabolism; phospholipid metabolism. Its function is as follows. Catalyzes the transfer of an acyl group from acyl-phosphate (acyl-PO(4)) to glycerol-3-phosphate (G3P) to form lysophosphatidic acid (LPA). This enzyme utilizes acyl-phosphate as fatty acyl donor, but not acyl-CoA or acyl-ACP. In Pseudomonas putida (strain ATCC 47054 / DSM 6125 / CFBP 8728 / NCIMB 11950 / KT2440), this protein is Glycerol-3-phosphate acyltransferase.